The sequence spans 95 residues: Aspartyl/glutamyl-tRNA(Asn/Gln) amidotransferase subunit C (95 aa).

It belongs to the GatC family. As to quaternary structure, heterotrimer of A, B and C subunits.

The catalysed reaction is L-glutamyl-tRNA(Gln) + L-glutamine + ATP + H2O = L-glutaminyl-tRNA(Gln) + L-glutamate + ADP + phosphate + H(+). It catalyses the reaction L-aspartyl-tRNA(Asn) + L-glutamine + ATP + H2O = L-asparaginyl-tRNA(Asn) + L-glutamate + ADP + phosphate + 2 H(+). Allows the formation of correctly charged Asn-tRNA(Asn) or Gln-tRNA(Gln) through the transamidation of misacylated Asp-tRNA(Asn) or Glu-tRNA(Gln) in organisms which lack either or both of asparaginyl-tRNA or glutaminyl-tRNA synthetases. The reaction takes place in the presence of glutamine and ATP through an activated phospho-Asp-tRNA(Asn) or phospho-Glu-tRNA(Gln). The polypeptide is Aspartyl/glutamyl-tRNA(Asn/Gln) amidotransferase subunit C (Campylobacter lari (strain RM2100 / D67 / ATCC BAA-1060)).